The following is a 282-amino-acid chain: Bifunctional protein FolD (282 aa).

163 to 165 (GRS) serves as a coordination point for NADP(+).

The protein belongs to the tetrahydrofolate dehydrogenase/cyclohydrolase family. As to quaternary structure, homodimer.

The enzyme catalyses (6R)-5,10-methylene-5,6,7,8-tetrahydrofolate + NADP(+) = (6R)-5,10-methenyltetrahydrofolate + NADPH. It carries out the reaction (6R)-5,10-methenyltetrahydrofolate + H2O = (6R)-10-formyltetrahydrofolate + H(+). It functions in the pathway one-carbon metabolism; tetrahydrofolate interconversion. Catalyzes the oxidation of 5,10-methylenetetrahydrofolate to 5,10-methenyltetrahydrofolate and then the hydrolysis of 5,10-methenyltetrahydrofolate to 10-formyltetrahydrofolate. The protein is Bifunctional protein FolD of Leuconostoc citreum (strain KM20).